Reading from the N-terminus, the 445-residue chain is MAQSSTNKVSYFESVNKVLYEGKGSKNPLAFKYYNPEEIVGDKTMKEQLRFSIAYWHTFTADGTDPFGAATMQRAWDKYDGMDLAKARVEAAFQLFEKLNVPFFAFHDRDIAPEGSTLRETNKNLDVIVTMIKDYMKTSNVKLLWNTANMFTNPRFVHGAATSCNADVFAYAAAQVKKGLETAKELGAENYVFWGGREGYDTLLNTNLKLELDNLARFMQMSVDYAKEIGYTGQFLIEPKPKEPTTHQYDTDAATTISFLRQYGLENHFKLNLEANHATLAGHTFEHELRVARVQGFLGSVDANQGNPLLGWDTDEFPTNLYSTTLAMYEILQNGGLGSGGLNFDAKVRRASFEEEDLVYAHIAGMDAFARGLKVAHKLLEDRVFENIIDERYHSFRDGIGLEIVEGRANFHTLEQYALQNSIIKNQSGKQERLKAILNQYILEV.

Residues H107 and D110 contribute to the active site. Positions 238, 274, 277, 302, 313, 315, and 345 each coordinate Mg(2+).

This sequence belongs to the xylose isomerase family. In terms of assembly, homotetramer. It depends on Mg(2+) as a cofactor.

It localises to the cytoplasm. The catalysed reaction is alpha-D-xylose = alpha-D-xylulofuranose. The sequence is that of Xylose isomerase from Bacillus cereus (strain ATCC 10987 / NRS 248).